A 546-amino-acid polypeptide reads, in one-letter code: Chaperonin GroEL 1 (546 aa).

ATP is bound by residues 30–33 (TLGP), lysine 51, 87–91 (DGTTT), glycine 415, 479–481 (NAA), and aspartate 495. A disordered region spans residues 526–546 (KEDAPMPGGMPGGMGGMGMDM). Residues 534 to 546 (GMPGGMGGMGMDM) are compositionally biased toward gly residues.

The protein belongs to the chaperonin (HSP60) family. In terms of assembly, forms a cylinder of 14 subunits composed of two heptameric rings stacked back-to-back. Interacts with the co-chaperonin GroES.

It localises to the cytoplasm. It catalyses the reaction ATP + H2O + a folded polypeptide = ADP + phosphate + an unfolded polypeptide.. Functionally, together with its co-chaperonin GroES, plays an essential role in assisting protein folding. The GroEL-GroES system forms a nano-cage that allows encapsulation of the non-native substrate proteins and provides a physical environment optimized to promote and accelerate protein folding. The protein is Chaperonin GroEL 1 of Burkholderia pseudomallei (strain K96243).